We begin with the raw amino-acid sequence, 216 residues long: Thiopurine S-methyltransferase (216 aa).

Residues W10, L45, E66, and R123 each coordinate S-adenosyl-L-methionine.

It belongs to the class I-like SAM-binding methyltransferase superfamily. TPMT family.

It is found in the cytoplasm. The catalysed reaction is S-adenosyl-L-methionine + a thiopurine = S-adenosyl-L-homocysteine + a thiopurine S-methylether.. This is Thiopurine S-methyltransferase from Pseudomonas putida (strain ATCC 47054 / DSM 6125 / CFBP 8728 / NCIMB 11950 / KT2440).